The chain runs to 317 residues: Osteopontin (317 aa).

Positions 1 to 16 (MRLAVVCFCLFGLASC) are cleaved as a signal peptide. Residues serine 26, serine 27, serine 60, serine 62, and serine 63 each carry the phosphoserine modification. Positions 43–297 (WLKPDPSQKQ…LVLDPKSKED (255 aa)) are disordered. The segment covering 49-63 (SQKQNLLAPQNSVSS) has biased composition (polar residues). A Phosphothreonine modification is found at threonine 66. Phosphoserine is present on residues serine 76, serine 78, serine 81, serine 106, serine 109, serine 112, serine 115, and serine 118. Over residues 86-110 (DDDDDDDDDGDHAESEDSVNSDESD) the composition is skewed to acidic residues. Residues threonine 123, threonine 132, and threonine 137 are each glycosylated (O-linked (GalNAc...) threonine). The Cell attachment site signature appears at 144-146 (RGD). Residues threonine 170 and threonine 175 each carry the phosphothreonine modification. A compositionally biased stretch (basic and acidic residues) spans 174–187 (LTSRMKSQESDEAI). Phosphoserine is present on residues serine 176, serine 180, serine 200, serine 204, serine 209, serine 213, and serine 219. The span at 197 to 216 (SVPSDQDSNGKTSHESSQLD) shows a compositional bias: polar residues. Serine 219 carries an O-linked (Xyl...) (chondroitin sulfate) serine glycan. Position 222 is a phosphothreonine (threonine 222). 2 stretches are compositionally biased toward basic and acidic residues: residues 223–240 (HSLEQSKEYKQRASHEST) and 248–263 (SAEKPDAIDSAERSDA). Residues serine 224, serine 228, serine 257, serine 261, serine 266, serine 270, serine 273, serine 278, serine 283, serine 294, serine 306, serine 311, serine 313, and serine 314 each carry the phosphoserine modification. The segment covering 273–297 (SLEHQSHEFHSHEDKLVLDPKSKED) has biased composition (basic and acidic residues). Residue serine 311 is glycosylated (O-linked (Xyl...) (chondroitin sulfate) serine).

This sequence belongs to the osteopontin family. In terms of assembly, interacts (via N-terminus) with integrin ITGA9:ITGB1. Extensively phosphorylated by FAM20C in the extracellular medium at multiple sites within the S-x-E/pS motif. The phosphorylated form inhibits hydroxyapatite crystallization. Dephosphorylation via a mechanism involving ALPL/TNAP promotes hydroxyapatite crystallization. Post-translationally, O-glycosylated. In terms of processing, forms covalent cross-links mediated by transglutaminase TGM2, between a glutamine and the epsilon-amino group of a lysine residue, forming homopolymers and heteropolymers, increasing its collagen binding properties.

The protein resides in the secreted. Functionally, major non-collagenous bone protein that binds tightly to hydroxyapatite. Appears to form an integral part of the mineralized matrix. Probably important to cell-matrix interaction. In terms of biological role, acts as a cytokine involved in enhancing production of interferon-gamma and interleukin-12 and reducing production of interleukin-10 and is essential in the pathway that leads to type I immunity. This Rattus norvegicus (Rat) protein is Osteopontin (Spp1).